The following is a 557-amino-acid chain: Neurofilament light polypeptide (557 aa).

Position 2 is an N-acetylserine (Ser-2). The interval 2–89 is head; sequence SSYSYDPYYT…KIVRTQEKAQ (88 aa). One can recognise an IF rod domain in the interval 86 to 396; sequence EKAQLQDLND…KLLEGEETRL (311 aa). Positions 90–121 are coil 1A; sequence LQDLNDRFANFIERVHELEQRNKVLEAELLLL. The linker 1 stretch occupies residues 122-134; that stretch reads RQKHNEPSRLRDL. The interval 135 to 230 is coil 1B; it reads YEQEVRELRL…KVHEEELAQL (96 aa). Residues 231–248 are linker 12; it reads QSQVQYAQISLEVEVAKP. Residues 249–267 are coil 2A; that stretch reads DLSSALRDIRAQYEKLAAK. Positions 268-276 are linker 2; the sequence is NMQSAEDWF. A coil 2B region spans residues 277–392; it reads KSRFTVLTQS…AAYRKLLEGE (116 aa). The interval 393–437 is tail, subdomain A; it reads ETRLSFSGVGAITSGYTQSAPVFGRSAYSLQSSSYMTSRAFPTYY. The tract at residues 393–557 is tail; that stretch reads ETRLSFSGVG…KKKKKKKKKK (165 aa). Positions 438–557 are tail, subdomain B (acidic); it reads SSHVQEEQLD…KKKKKKKKKK (120 aa). The disordered stretch occupies residues 452-557; sequence IESSRAEEAK…KKKKKKKKKK (106 aa). Residues 453 to 464 show a composition bias toward basic and acidic residues; it reads ESSRAEEAKAEA. The span at 465 to 538 shows a compositional bias: acidic residues; sequence PEEEEEEAGE…GEGEEEEEGK (74 aa). A compositionally biased stretch (basic and acidic residues) spans 539-548; it reads GEEPAEEESK.

This sequence belongs to the intermediate filament family. In terms of assembly, forms homodimers (in vitro).

The protein localises to the cell projection. It is found in the axon. The protein resides in the cytoplasm. Its subcellular location is the cytoskeleton. In terms of biological role, neurofilaments usually contain three intermediate filament proteins: NEFL, NEFM, and NEFH which are involved in the maintenance of neuronal caliber. May additionally cooperate with other neuronal intermediate filament proteins to form neuronal filamentous networks. The chain is Neurofilament light polypeptide (nefl) from Xenopus tropicalis (Western clawed frog).